The following is a 546-amino-acid chain: Arginine--tRNA ligase (546 aa).

Positions 122 to 132 match the 'HIGH' region motif; it reads ANPTGPFTVGH.

This sequence belongs to the class-I aminoacyl-tRNA synthetase family. As to quaternary structure, monomer.

Its subcellular location is the cytoplasm. The catalysed reaction is tRNA(Arg) + L-arginine + ATP = L-arginyl-tRNA(Arg) + AMP + diphosphate. The polypeptide is Arginine--tRNA ligase (Thermotoga petrophila (strain ATCC BAA-488 / DSM 13995 / JCM 10881 / RKU-1)).